The primary structure comprises 331 residues: 6-phosphogluconolactonase (331 aa).

The protein belongs to the cycloisomerase 2 family.

It carries out the reaction 6-phospho-D-glucono-1,5-lactone + H2O = 6-phospho-D-gluconate + H(+). It participates in carbohydrate degradation; pentose phosphate pathway; D-ribulose 5-phosphate from D-glucose 6-phosphate (oxidative stage): step 2/3. Functionally, catalyzes the hydrolysis of 6-phosphogluconolactone to 6-phosphogluconate. This chain is 6-phosphogluconolactonase, found in Serratia proteamaculans (strain 568).